The sequence spans 1119 residues: Putative transcription factor SEF1 (1119 aa).

Disordered stretches follow at residues 1-70 (MGDP…TQSR) and 86-105 (QNGE…SKGK). Polar residues predominate over residues 47-70 (LHTQQSYYGNGTDGASESALTQSR). Positions 118 to 148 (CTHCRQHKIKCNASEKFPAPCSRCERMGLHC) form a DNA-binding region, zn(2)-C6 fungal-type. Disordered regions lie at residues 236–290 (QLLQ…PANT), 306–335 (SQQI…SSKQ), 894–913 (ASSS…TDTN), 926–962 (KKSS…AHNT), and 994–1018 (SADS…PDTN). A compositionally biased stretch (low complexity) spans 243 to 260 (TTTTNPTTSSNSKVVTPT). Positions 261–288 (GSDHSPASHNGGSLSSGKPQLLNDSVPA) are enriched in polar residues. Residues 306 to 322 (SQQISSSSPQNSSPTTT) are compositionally biased toward low complexity. Composition is skewed to polar residues over residues 323–335 (GHSP…SSKQ), 902–913 (RLNADNPTTDTN), and 931–942 (SSDTPTNKPKFN). Positions 943-954 (STSSIPTATPTS) are enriched in low complexity.

It is found in the nucleus. Putative transcription factor. Suppresses the lethal phenotype of RPM2 deletion. This chain is Putative transcription factor SEF1 (SEF1), found in Kluyveromyces lactis (strain ATCC 8585 / CBS 2359 / DSM 70799 / NBRC 1267 / NRRL Y-1140 / WM37) (Yeast).